Here is a 252-residue protein sequence, read N- to C-terminus: Uracil-DNA glycosylase (252 aa).

D87 functions as the Proton acceptor in the catalytic mechanism.

It belongs to the uracil-DNA glycosylase (UDG) superfamily. UNG family.

Its subcellular location is the host nucleus. The enzyme catalyses Hydrolyzes single-stranded DNA or mismatched double-stranded DNA and polynucleotides, releasing free uracil.. In terms of biological role, excises uracil residues from the DNA which can arise as a result of misincorporation of dUMP residues by DNA polymerase or deamination of cytosines. Therefore may reduce deleterious uracil incorporation into the viral genome, particularly in terminally differentiated cells which lack DNA repair enzymes. This Alcelaphine herpesvirus 1 (strain C500) (AlHV-1) protein is Uracil-DNA glycosylase (46).